Reading from the N-terminus, the 1041-residue chain is Pre-mRNA-splicing factor ATP-dependent RNA helicase DHX16 (1041 aa).

Disordered stretches follow at residues 101-207 (EDSE…AYEE) and 371-391 (LQGDEEPSAPPTSTQAQQKES). Phosphoserine occurs at positions 103, 106, and 107. Residues 119 to 130 (QKKRKKRKHLRK) are compositionally biased toward basic residues. Position 160 is a phosphoserine (serine 160). Residues 166-207 (RTERERLQDLEERDAFAERVRQRDKDRTRNVLERSDKKAYEE) are compositionally biased toward basic and acidic residues. Over residues 381–391 (PTSTQAQQKES) the composition is skewed to polar residues. The 165-residue stretch at 409–573 (LAAIANHQVL…FDDAPVFRIP (165 aa)) folds into the Helicase ATP-binding domain. Residue 422–429 (GETGSGKT) coordinates ATP. The DEAH box signature appears at 520-523 (DEAH). One can recognise a Helicase C-terminal domain in the interval 598–771 (SVLQIHVTQP…NVVLLLKSLG (174 aa)). A Phosphothreonine modification is found at threonine 712.

This sequence belongs to the DEAD box helicase family. DEAH subfamily. DDX16/PRP8 sub-subfamily. Component of pre-catalytic spliceosome complexes. Component of the minor spliceosome, which splices U12-type introns. Interacts with GPKOW. Interacts with TRIM6. Interacts with RIGI. In terms of tissue distribution, expressed in the spleen, thyroid and testis. Also expressed in the brain and cerebellum.

The protein resides in the nucleus. It localises to the nucleoplasm. The protein localises to the cytoplasm. The catalysed reaction is ATP + H2O = ADP + phosphate + H(+). In terms of biological role, required for pre-mRNA splicing as a component of the spliceosome. Contributes to pre-mRNA splicing after spliceosome formation and prior to the first transesterification reaction. As a component of the minor spliceosome, involved in the splicing of U12-type introns in pre-mRNAs. Also plays a role in innate antiviral response by acting as a pattern recognition receptor sensing splicing signals in viral RNA. Mechanistically, TRIM6 promotes the interaction between unanchored 'Lys-48'-polyubiquitin chains and DHX16, leading to DHX16 interaction with RIGI and ssRNA to amplify RIGI-dependent innate antiviral immune responses. This chain is Pre-mRNA-splicing factor ATP-dependent RNA helicase DHX16 (DHX16), found in Homo sapiens (Human).